A 296-amino-acid chain; its full sequence is Acetylglutamate kinase (296 aa).

Residues 67–68, Arg-89, and Asn-194 each bind substrate; that span reads GG.

The protein belongs to the acetylglutamate kinase family. ArgB subfamily.

It is found in the cytoplasm. The enzyme catalyses N-acetyl-L-glutamate + ATP = N-acetyl-L-glutamyl 5-phosphate + ADP. Its pathway is amino-acid biosynthesis; L-arginine biosynthesis; N(2)-acetyl-L-ornithine from L-glutamate: step 2/4. Catalyzes the ATP-dependent phosphorylation of N-acetyl-L-glutamate. The chain is Acetylglutamate kinase from Brucella anthropi (strain ATCC 49188 / DSM 6882 / CCUG 24695 / JCM 21032 / LMG 3331 / NBRC 15819 / NCTC 12168 / Alc 37) (Ochrobactrum anthropi).